Reading from the N-terminus, the 180-residue chain is MIGSLVATAFWAMLPAYVPNNAAVLAGGGRPIDGGRDWRGARLLGDGKTWRGTAVGTLTGVVLALALNRIAEPASAALGVDLPTFALPAAFALAFGAMCGDIGASFLKRRSGRERGAAFPGLDQLDFVVVALAAVFVVDTDWALAVFTPSVLVVVLVMTPILHVVTNVGAYALGLKNEPW.

5 consecutive transmembrane segments (helical) span residues 5–25 (LVATAFWAMLPAYVPNNAAVL), 54–74 (AVGTLTGVVLALALNRIAEPA), 78–98 (LGVDLPTFALPAAFALAFGAM), 118–138 (AFPGLDQLDFVVVALAAVFVV), and 142–162 (WALAVFTPSVLVVVLVMTPIL).

Belongs to the CDP-archaeol synthase family. Requires Mg(2+) as cofactor.

It localises to the cell membrane. The enzyme catalyses 2,3-bis-O-(geranylgeranyl)-sn-glycerol 1-phosphate + CTP + H(+) = CDP-2,3-bis-O-(geranylgeranyl)-sn-glycerol + diphosphate. Its pathway is membrane lipid metabolism; glycerophospholipid metabolism. Functionally, catalyzes the formation of CDP-2,3-bis-(O-geranylgeranyl)-sn-glycerol (CDP-archaeol) from 2,3-bis-(O-geranylgeranyl)-sn-glycerol 1-phosphate (DGGGP) and CTP. This reaction is the third ether-bond-formation step in the biosynthesis of archaeal membrane lipids. This chain is CDP-archaeol synthase, found in Halorubrum lacusprofundi (strain ATCC 49239 / DSM 5036 / JCM 8891 / ACAM 34).